A 116-amino-acid chain; its full sequence is HTH-type transcriptional regulator SarV (116 aa).

Positions 51–74 (RDTLHFEMLWDTSKIDVIIRKIYK) form a DNA-binding region, H-T-H motif.

Belongs to the SarA family.

It is found in the cytoplasm. Part of the pathway by which MgrA and SarA control autolysis. The chain is HTH-type transcriptional regulator SarV (sarV) from Staphylococcus aureus (strain Mu50 / ATCC 700699).